The sequence spans 561 residues: DNA ligase B (561 aa).

The N6-AMP-lysine intermediate role is filled by lysine 128.

It belongs to the NAD-dependent DNA ligase family. LigB subfamily.

The enzyme catalyses NAD(+) + (deoxyribonucleotide)n-3'-hydroxyl + 5'-phospho-(deoxyribonucleotide)m = (deoxyribonucleotide)n+m + AMP + beta-nicotinamide D-nucleotide.. In terms of biological role, catalyzes the formation of phosphodiester linkages between 5'-phosphoryl and 3'-hydroxyl groups in double-stranded DNA using NAD as a coenzyme and as the energy source for the reaction. This Pseudomonas syringae pv. syringae (strain B728a) protein is DNA ligase B.